A 101-amino-acid chain; its full sequence is Protein RnfH (101 aa).

The protein belongs to the UPF0125 (RnfH) family.

This chain is Protein RnfH, found in Coxiella burnetii (strain CbuG_Q212) (Coxiella burnetii (strain Q212)).